The following is a 382-amino-acid chain: Methylthioribose-1-phosphate isomerase (382 aa).

Residue aspartate 261 is the Proton donor of the active site.

This sequence belongs to the eIF-2B alpha/beta/delta subunits family. MtnA subfamily.

The protein resides in the cytoplasm. The protein localises to the nucleus. The enzyme catalyses 5-(methylsulfanyl)-alpha-D-ribose 1-phosphate = 5-(methylsulfanyl)-D-ribulose 1-phosphate. It participates in amino-acid biosynthesis; L-methionine biosynthesis via salvage pathway; L-methionine from S-methyl-5-thio-alpha-D-ribose 1-phosphate: step 1/6. Its function is as follows. Catalyzes the interconversion of methylthioribose-1-phosphate (MTR-1-P) into methylthioribulose-1-phosphate (MTRu-1-P). In Ricinus communis (Castor bean), this protein is Methylthioribose-1-phosphate isomerase.